Consider the following 1025-residue polypeptide: DNA polymerase (1025 aa).

The protein belongs to the DNA polymerase type-B family.

It catalyses the reaction DNA(n) + a 2'-deoxyribonucleoside 5'-triphosphate = DNA(n+1) + diphosphate. In terms of biological role, replicates the viral genome. Host DNA polymerases cannot substitute for the viral enzyme in this process. The sequence is that of DNA polymerase from Noctuidae (owlet moths).